A 438-amino-acid chain; its full sequence is uncharacterized protein (438 aa).

H59 is a Zn(2+) binding site. The Proton acceptor role is filled by E62. Positions 63 and 139 each coordinate Zn(2+).

Belongs to the peptidase M16 family. It depends on Zn(2+) as a cofactor.

This is an uncharacterized protein from Mycobacterium bovis (strain ATCC BAA-935 / AF2122/97).